The sequence spans 788 residues: Protein translocase subunit SecA 2 (788 aa).

ATP-binding positions include Gln86, 104-108 (GEGKT), and Asp493.

It belongs to the SecA family. In terms of assembly, monomer and homodimer. Part of the essential Sec protein translocation apparatus which comprises SecA, SecYEG and auxiliary proteins SecDF. Other proteins may also be involved.

The protein resides in the cell membrane. The protein localises to the cytoplasm. It carries out the reaction ATP + H2O + cellular proteinSide 1 = ADP + phosphate + cellular proteinSide 2.. Its function is as follows. Part of the Sec protein translocase complex. Interacts with the SecYEG preprotein conducting channel. Has a central role in coupling the hydrolysis of ATP to the transfer of proteins into and across the cell membrane, serving as an ATP-driven molecular motor driving the stepwise translocation of polypeptide chains across the membrane. The polypeptide is Protein translocase subunit SecA 2 (Bacillus anthracis).